The sequence spans 1434 residues: Receptor-type tyrosine-protein phosphatase U (1434 aa).

An N-terminal signal peptide occupies residues 1-17 (MRSARALLLALALRVCA). Residues 18–748 (LDSETPSAGC…QHSEEMGLIL (731 aa)) are Extracellular-facing. The region spanning 25 to 187 (AGCTFEEDDD…ILLLNYPCSK (163 aa)) is the MAM domain. A glycan (N-linked (GlcNAc...) asparagine) is linked at N74. The Ig-like C2-type domain occupies 189-274 (PHFSRLGDVE…TQSSRGSGVS (86 aa)). C209 and C263 form a disulfide bridge. Fibronectin type-III domains lie at 287 to 382 (PIAP…CAEP), 385 to 483 (APKG…TDED), 484 to 590 (VPGG…SAPT), and 597 to 677 (PSPL…TEAK). N-linked (GlcNAc...) asparagine glycosylation occurs at N409. N684 carries N-linked (GlcNAc...) asparagine glycosylation. The helical transmembrane segment at 749-769 (GICAGGLVVLIILLGAIIVVI) threads the bilayer. Residues 770–1434 (RKGKPVNMTK…LEYLESLETR (665 aa)) are Cytoplasmic-facing. The span at 824-839 (RGDQRSSVVNESSSLL) shows a compositional bias: polar residues. Residues 824–851 (RGDQRSSVVNESSSLLGGSPRRQCGRKG) are disordered. 2 Tyrosine-protein phosphatase domains span residues 876–1132 (KTAE…ILEA) and 1164–1427 (LREE…ALEY). Substrate contacts are provided by residues E1041, 1073–1079 (CSAGTGR), and Q1117. C1073 serves as the catalytic Phosphocysteine intermediate. C1368 serves as the catalytic Phosphocysteine intermediate.

Belongs to the protein-tyrosine phosphatase family. Receptor class 2B subfamily.

The protein localises to the cell junction. It is found in the cell membrane. The enzyme catalyses O-phospho-L-tyrosyl-[protein] + H2O = L-tyrosyl-[protein] + phosphate. Tyrosine-protein phosphatase which dephosphorylates CTNNB1. May function in cell proliferation and migration and play a role in the maintenance of epithelial integrity. This Gallus gallus (Chicken) protein is Receptor-type tyrosine-protein phosphatase U (PTPRU).